A 622-amino-acid polypeptide reads, in one-letter code: MALLQIAEPGMSAEPHKHRLAVGIDLGTTNSLVATVRNGLSVCLADEEGRAMLPSIVRYRADGAVQVGHAAAPFQATDPKNTIVSAKRFMGRGLKDVAYVEAMPYDFEDAPGMVRLRTVQGVKSPVEVSAEILRALRERAEASLGGPLTGAVITVPAYFDDAQRQATKDAARLAGLEVLRLLNEPTAAAVAYGLDNAAEGVYAVYDLGGGTFDLSVLKLSRGVFEVLSTNGDAALGGDDFDHRLFCWVLDKARIAPPSTEDARRLQLKAREAKELLTACESAQIQCRLASGEEVDLVVTREAFAEMTAHLVKKTLGPVRKALRDAGLAPEDIKGVVMVGGATRMPHIQRAVAEYFGQEPLNNLDPDKVVALGAAIQANVLAGNRASEDDWLLLDVIPLSLGLETMGGLVEKVVPRNSTLPIARAQEFTTFKDGQTAMAFHVVQGERELVADCRSLARFELRGIPPMAAGAARIRVTFQVDADGLLSVSAREMSSGVEASVLVKPSYGLSDDEISGMLREGMERAGDDMAARALREQQVEADRVIEATEHALAADGSLLNAEERASIDAAIDALRALRAGTDHRAIKAGIDALSRATDEFAARRMDHSIRAALTGHKLDEFQT.

Belongs to the heat shock protein 70 family.

In terms of biological role, chaperone involved in the maturation of iron-sulfur cluster-containing proteins. Has a low intrinsic ATPase activity which is markedly stimulated by HscB. This chain is Chaperone protein HscA homolog, found in Azoarcus sp. (strain BH72).